The sequence spans 870 residues: Lysosomal cholesterol signaling protein (870 aa).

At Met-1–Ser-38 the chain is on the lumenal side. Residues Met-1 to Met-370 form a PIN-like transporter region. N-linked (GlcNAc...) asparagine glycans are attached at residues Asn-9, Asn-15, and Asn-29. Residues Ile-39–Ala-59 traverse the membrane as a helical segment. Positions 43 and 57 each coordinate cholesterol. Topologically, residues Gly-60 to Arg-79 are cytoplasmic. Residues Phe-80–Trp-100 form a helical membrane-spanning segment. Topologically, residues Ser-101 to Tyr-104 are lumenal. Residues Ser-105 to Ala-125 traverse the membrane as a helical segment. The Cytoplasmic segment spans residues Ser-126–Lys-133. A discontinuously helical membrane pass occupies residues Ala-134–Val-154. Residues Glu-155 to Gln-167 lie on the Lumenal side of the membrane. The helical transmembrane segment at Tyr-168–Cys-188 threads the bilayer. Over Glu-189–Arg-213 the chain is Cytoplasmic. A discontinuously helical transmembrane segment spans residues Val-214–Asp-234. Topologically, residues Arg-235–Asn-243 are lumenal. Residues Phe-244 to Met-264 traverse the membrane as a discontinuously helical segment. Over Val-265–Lys-273 the chain is Cytoplasmic. 3 residues coordinate cholesterol: Gly-266, Lys-267, and Ile-268. A helical transmembrane segment spans residues Ser-274 to Cys-294. Topologically, residues Arg-295 to Asn-315 are lumenal. N-linked (GlcNAc...) asparagine glycosylation occurs at Asn-309. A discontinuously helical membrane pass occupies residues Tyr-316 to Phe-336. At Asn-337–Gly-346 the chain is on the cytoplasmic side. Residues Met-347–Phe-367 traverse the membrane as a helical segment. Residues Pro-368–Asn-381 are Lumenal-facing. Positions Gln-380–Leu-717 are GPCR. Asn-381 is a glycosylation site (N-linked (GlcNAc...) asparagine). Residues Val-382–Leu-402 form a helical membrane-spanning segment. Topologically, residues Leu-403 to Leu-414 are cytoplasmic. The chain crosses the membrane as a helical span at residues Thr-415–Val-435. The Lumenal segment spans residues Lys-436–Lys-438. A helical transmembrane segment spans residues Asn-439–Leu-459. Residues Trp-460 to Pro-480 lie on the Cytoplasmic side of the membrane. Residues Val-481–Ile-501 form a helical membrane-spanning segment. The Lumenal portion of the chain corresponds to Thr-502 to Gln-520. Residues Met-521–Cys-541 traverse the membrane as a helical segment. Over Met-542–Leu-660 the chain is Cytoplasmic. Arg-657 contributes to the cholesterol binding site. The chain crosses the membrane as a helical span at residues Leu-661–Phe-681. Topologically, residues Asn-682 to Glu-691 are lumenal. A helical membrane pass occupies residues Leu-692–Gly-712. Residues Leu-713–Thr-870 are Cytoplasmic-facing. The DEP domain maps to Tyr-757–Gln-835.

As to quaternary structure, homodimer; via the transporter region and DEP domain. Interacts with the GATOR1 complex and prevents interaction between GATOR1 and KICSTOR; this interaction is disrupted upon cholesterol starvation.

It is found in the lysosome membrane. Functionally, cholesterol-binding protein that acts as a regulator of mTORC1 signaling pathway. Acts as a sensor of cholesterol to signal cholesterol sufficiency to mTORC1: in presence of cholesterol, binds cholesterol, leading to disruption of the interaction between the GATOR1 and KICSTOR complexes and promotion of mTORC1 signaling. Upon cholesterol starvation, GPR155/LYCHOS is unable to perturb the association between GATOR1 and KICSTOR, leading to mTORC1 signaling inhibition. Binds indole-3-acetic acid and may play a role in tryptophan metabolism. This chain is Lysosomal cholesterol signaling protein, found in Homo sapiens (Human).